The sequence spans 480 residues: MILKLHNTRTKDFSELTNFDNVKVYACGPTVYNYAHIGNFRTYIFGDLLIKTLRFLGYKVNYAMNITDIGHLTGDLDDGEDKVVKTAREKGLTVQEISEFFTEAFFKDCRKLNVVYPDKVLIASKHIPIMIEVVKILEEKKITYFSNGNVYFDTSCFKSYGEMAGIDLIDKDMTFSRVDIDKFKRNKTDFVLWFTNSKFKDQEMKWDSPWGFGYPSWHLECAAMNLEYFKDTLDIHLGGVDHIGVHHINEIAIVECFLNKKWCDIFVHGEFLIMDYNKMSKSRGNFITVKDLEEQNFSPLDFRYLCLTSHYRNQLKFSLNNLQASKIARENMINRLSYFYASLDPVALGVLNKDLKNFGFSEEKEYYDSFIEKVSFDLNISQGLALLWEIIKSENLSFVSKLRLAFIFDEIMSLNLREEILKNLENHDVVVDENMKTLIEERRIAKCEKNFKRADEIRDFFAKKGFVLVDTKEGTKVKRG.

Zn(2+) is bound at residue Cys-27. The 'HIGH' region signature appears at 29–39 (PTVYNYAHIGN). Positions 221, 246, and 250 each coordinate Zn(2+). The 'KMSKS' region motif lies at 278–282 (KMSKS). Lys-281 lines the ATP pocket.

Belongs to the class-I aminoacyl-tRNA synthetase family. Monomer. Requires Zn(2+) as cofactor.

Its subcellular location is the cytoplasm. It carries out the reaction tRNA(Cys) + L-cysteine + ATP = L-cysteinyl-tRNA(Cys) + AMP + diphosphate. In Borreliella afzelii (strain PKo) (Borrelia afzelii), this protein is Cysteine--tRNA ligase.